Here is a 189-residue protein sequence, read N- to C-terminus: Crossover junction endodeoxyribonuclease RuvC (189 aa).

Catalysis depends on residues Asp12, Glu72, and Asp147. Mg(2+)-binding residues include Asp12, Glu72, and Asp147.

Belongs to the RuvC family. As to quaternary structure, homodimer which binds Holliday junction (HJ) DNA. The HJ becomes 2-fold symmetrical on binding to RuvC with unstacked arms; it has a different conformation from HJ DNA in complex with RuvA. In the full resolvosome a probable DNA-RuvA(4)-RuvB(12)-RuvC(2) complex forms which resolves the HJ. Requires Mg(2+) as cofactor.

The protein resides in the cytoplasm. The enzyme catalyses Endonucleolytic cleavage at a junction such as a reciprocal single-stranded crossover between two homologous DNA duplexes (Holliday junction).. In terms of biological role, the RuvA-RuvB-RuvC complex processes Holliday junction (HJ) DNA during genetic recombination and DNA repair. Endonuclease that resolves HJ intermediates. Cleaves cruciform DNA by making single-stranded nicks across the HJ at symmetrical positions within the homologous arms, yielding a 5'-phosphate and a 3'-hydroxyl group; requires a central core of homology in the junction. The consensus cleavage sequence is 5'-(A/T)TT(C/G)-3'. Cleavage occurs on the 3'-side of the TT dinucleotide at the point of strand exchange. HJ branch migration catalyzed by RuvA-RuvB allows RuvC to scan DNA until it finds its consensus sequence, where it cleaves and resolves the cruciform DNA. The sequence is that of Crossover junction endodeoxyribonuclease RuvC from Porphyromonas gingivalis (strain ATCC BAA-308 / W83).